The primary structure comprises 165 residues: Peptide methionine sulfoxide reductase MsrA (165 aa).

The active site involves C10.

It belongs to the MsrA Met sulfoxide reductase family.

It catalyses the reaction L-methionyl-[protein] + [thioredoxin]-disulfide + H2O = L-methionyl-(S)-S-oxide-[protein] + [thioredoxin]-dithiol. It carries out the reaction [thioredoxin]-disulfide + L-methionine + H2O = L-methionine (S)-S-oxide + [thioredoxin]-dithiol. Functionally, has an important function as a repair enzyme for proteins that have been inactivated by oxidation. Catalyzes the reversible oxidation-reduction of methionine sulfoxide in proteins to methionine. This chain is Peptide methionine sulfoxide reductase MsrA, found in Campylobacter jejuni subsp. jejuni serotype O:23/36 (strain 81-176).